A 171-amino-acid chain; its full sequence is Large ribosomal subunit protein bL17 (171 aa).

Residues 140-152 (KREIQTKAREEKR) show a composition bias toward basic and acidic residues. Positions 140–171 (KREIQTKAREEKRATRKSNSAPVSKETTSKKK) are disordered. Residues 156–165 (KSNSAPVSKE) are compositionally biased toward polar residues.

Belongs to the bacterial ribosomal protein bL17 family. Part of the 50S ribosomal subunit. Contacts protein L32.

This chain is Large ribosomal subunit protein bL17, found in Leptospira interrogans serogroup Icterohaemorrhagiae serovar copenhageni (strain Fiocruz L1-130).